The sequence spans 117 residues: Prefoldin subunit beta (117 aa).

It belongs to the prefoldin subunit beta family. In terms of assembly, heterohexamer of two alpha and four beta subunits.

The protein localises to the cytoplasm. Functionally, molecular chaperone capable of stabilizing a range of proteins. Seems to fulfill an ATP-independent, HSP70-like function in archaeal de novo protein folding. This chain is Prefoldin subunit beta, found in Methanosarcina mazei (strain ATCC BAA-159 / DSM 3647 / Goe1 / Go1 / JCM 11833 / OCM 88) (Methanosarcina frisia).